The primary structure comprises 443 residues: 3-isopropylmalate dehydratase large subunit (443 aa).

Cysteine 347, cysteine 407, and cysteine 410 together coordinate [4Fe-4S] cluster.

This sequence belongs to the aconitase/IPM isomerase family. LeuC type 1 subfamily. Heterodimer of LeuC and LeuD. [4Fe-4S] cluster is required as a cofactor.

The catalysed reaction is (2R,3S)-3-isopropylmalate = (2S)-2-isopropylmalate. It functions in the pathway amino-acid biosynthesis; L-leucine biosynthesis; L-leucine from 3-methyl-2-oxobutanoate: step 2/4. Catalyzes the isomerization between 2-isopropylmalate and 3-isopropylmalate, via the formation of 2-isopropylmaleate. In Buchnera aphidicola subsp. Uroleucon aeneum, this protein is 3-isopropylmalate dehydratase large subunit.